Here is a 664-residue protein sequence, read N- to C-terminus: Serine/threonine-protein kinase PrkC (664 aa).

Over 1–348 (MIGKIINERY…PKPKKKSTRK (348 aa)) the chain is Cytoplasmic. One can recognise a Protein kinase domain in the interval 10–271 (YKIVDKLGGG…EMKDDLSSVL (262 aa)). Residues 16-24 (LGGGGMSTV) and Lys39 each bind ATP. Asp133 serves as the catalytic Proton acceptor. Phosphothreonine; by autocatalysis occurs at positions 161, 164, and 166. Residues 349–369 (IVLLSLIFSLLMIALVSFVAM) traverse the membrane as a helical segment. Topologically, residues 370-664 (AMFGNKYEET…AEKEVSYDDV (295 aa)) are extracellular. PASTA domains follow at residues 373 to 440 (GNKY…VISK), 441 to 509 (GPEK…YESL), and 510 to 575 (GIKQ…VVSK). Residues 541–565 (KEEYSDDIDEGDVISQSPKGKSVDE) are disordered. Positions 554–565 (ISQSPKGKSVDE) are enriched in polar residues.

This sequence belongs to the protein kinase superfamily. Ser/Thr protein kinase family. Homodimer.

It is found in the spore membrane. It catalyses the reaction L-seryl-[protein] + ATP = O-phospho-L-seryl-[protein] + ADP + H(+). The catalysed reaction is L-threonyl-[protein] + ATP = O-phospho-L-threonyl-[protein] + ADP + H(+). Its function is as follows. Probable protein kinase that is responsible for triggering spore germination in response to muropeptides, signaling bacteria to exit dormancy. PrkC is thus a germination receptor that binds peptidoglycan fragments containing either m-Dpm (meso-diaminopimelate) or L-lys, which act as spore germinants. Probably autophosphorylates and phosphorylates FusA (EF-G, elongation factor G); the latter modification is likely necessary for germination in response to peptidoglycan. This chain is Serine/threonine-protein kinase PrkC (prkC), found in Staphylococcus aureus (strain Newman).